The following is a 66-amino-acid chain: COP-associated protein (66 aa).

Residues 1-66 (MKVTFQVPSI…ALLDAGQEVV (66 aa)) form the HMA domain. Residues C12 and C15 each coordinate Cu cation.

Functionally, part of a cation-transporting system which is associated with copper export out of the H.pylori cells. The protein is COP-associated protein (copP) of Helicobacter pylori (strain J99 / ATCC 700824) (Campylobacter pylori J99).